The following is a 317-amino-acid chain: UV DNA damage endonuclease (317 aa).

Belongs to the uve1/UvsE family.

Functionally, component in a DNA repair pathway. Removal of UV LIGHT damaged nucleotides. Recognizes pyrimidine dimers and cleave a phosphodiester bond immediately 5' to the lesion. The polypeptide is UV DNA damage endonuclease (Bacillus anthracis (strain A0248)).